The chain runs to 215 residues: LexA repressor (215 aa).

Residues 28–48 (RAEIAAELGFSSPNAAEEHLR) constitute a DNA-binding region (H-T-H motif). Residues S133 and K170 each act as for autocatalytic cleavage activity in the active site.

This sequence belongs to the peptidase S24 family. Homodimer.

It carries out the reaction Hydrolysis of Ala-|-Gly bond in repressor LexA.. In terms of biological role, represses a number of genes involved in the response to DNA damage (SOS response), including recA and lexA. In the presence of single-stranded DNA, RecA interacts with LexA causing an autocatalytic cleavage which disrupts the DNA-binding part of LexA, leading to derepression of the SOS regulon and eventually DNA repair. The polypeptide is LexA repressor (Burkholderia mallei (strain NCTC 10247)).